The chain runs to 429 residues: Glutamate-1-semialdehyde 2,1-aminomutase 2 (429 aa).

K268 carries the N6-(pyridoxal phosphate)lysine modification.

The protein belongs to the class-III pyridoxal-phosphate-dependent aminotransferase family. HemL subfamily. In terms of assembly, homodimer. Requires pyridoxal 5'-phosphate as cofactor.

It localises to the cytoplasm. It catalyses the reaction (S)-4-amino-5-oxopentanoate = 5-aminolevulinate. Its pathway is porphyrin-containing compound metabolism; protoporphyrin-IX biosynthesis; 5-aminolevulinate from L-glutamyl-tRNA(Glu): step 2/2. The polypeptide is Glutamate-1-semialdehyde 2,1-aminomutase 2 (Staphylococcus epidermidis (strain ATCC 35984 / DSM 28319 / BCRC 17069 / CCUG 31568 / BM 3577 / RP62A)).